Reading from the N-terminus, the 240-residue chain is tRNA pseudouridine synthase B (240 aa).

D48 functions as the Nucleophile in the catalytic mechanism.

The protein belongs to the pseudouridine synthase TruB family. Type 1 subfamily.

It catalyses the reaction uridine(55) in tRNA = pseudouridine(55) in tRNA. In terms of biological role, responsible for synthesis of pseudouridine from uracil-55 in the psi GC loop of transfer RNAs. The chain is tRNA pseudouridine synthase B from Bacteroides thetaiotaomicron (strain ATCC 29148 / DSM 2079 / JCM 5827 / CCUG 10774 / NCTC 10582 / VPI-5482 / E50).